The following is a 140-amino-acid chain: MMSLLSLLLLGIALPATQAIDYRKCQASQILKEHGMDKVIPLPELVCTMFHISGLSTQAEVNNHSNKEYGIFQISNNGWCAEKQEDVANSVCGILCSKFLDDDITDDIECAKKILQLPEGLGYWKAHETFCIEDLDQWRC.

An N-terminal signal peptide occupies residues 1–19 (MMSLLSLLLLGIALPATQA). The C-type lysozyme domain maps to 20-140 (IDYRKCQASQ…CIEDLDQWRC (121 aa)). Intrachain disulfides connect C25/C140, C47/C131, C80/C96, and C92/C110. N63 is a glycosylation site (N-linked (GlcNAc...) asparagine). Ca(2+) contacts are provided by K98, D101, D103, D106, and D107.

It belongs to the glycosyl hydrolase 22 family. Lactose synthase (LS) is a heterodimer of a catalytic component, beta1,4-galactosyltransferase (beta4Gal-T1) and a regulatory component, alpha-lactalbumin (LA). In terms of tissue distribution, mammary gland specific. Secreted in milk.

Its subcellular location is the secreted. Regulatory subunit of lactose synthase, changes the substrate specificity of galactosyltransferase in the mammary gland making glucose a good acceptor substrate for this enzyme. This enables LS to synthesize lactose, the major carbohydrate component of milk. In other tissues, galactosyltransferase transfers galactose onto the N-acetylglucosamine of the oligosaccharide chains in glycoproteins. The polypeptide is Alpha-lactalbumin (LALBA) (Notamacropus eugenii (Tammar wallaby)).